We begin with the raw amino-acid sequence, 82 residues long: Small ribosomal subunit protein bS16 (82 aa).

The protein belongs to the bacterial ribosomal protein bS16 family.

The sequence is that of Small ribosomal subunit protein bS16 from Vibrio vulnificus (strain CMCP6).